Here is a 511-residue protein sequence, read N- to C-terminus: GATA zinc finger domain-containing protein 15 (511 aa).

A compositionally biased stretch (low complexity) spans 1 to 111; sequence TNNNNFNNIN…FNDNCNNNSN (111 aa). Disordered regions lie at residues 1 to 194, 214 to 313, and 325 to 355; these read TNNN…NTFF, NVNN…NENK, and NLQY…VLSP. Residues 124–135 show a composition bias toward polar residues; it reads SLQNINQYPLSP. The segment covering 136 to 166 has biased composition (low complexity); that stretch reads NNNKSSNQHLSHSSSNVNSQYYQTPYYQPSQ. Residues 167–185 are compositionally biased toward polar residues; that stretch reads KQNSPNSTPPLNGCQYENH. 2 stretches are compositionally biased toward low complexity: residues 214–309 and 337–351; these read NVNN…NNDN and SGST…PTSP. A GATA-type zinc finger spans residues 453–478; the sequence is CQACGTRASPEWRKGPDGFKSLCNAC.

This Dictyostelium discoideum (Social amoeba) protein is GATA zinc finger domain-containing protein 15 (gtaO).